An 85-amino-acid chain; its full sequence is Large ribosomal subunit protein bL27 (85 aa).

The segment at 1–23 (MAHKKAGGSTRNGRDSESKRLGV) is disordered.

Belongs to the bacterial ribosomal protein bL27 family.

The polypeptide is Large ribosomal subunit protein bL27 (Thioalkalivibrio sulfidiphilus (strain HL-EbGR7)).